The primary structure comprises 530 residues: Cytochrome P450 2U1 (530 aa).

4 helical membrane passes run 21–41 (VRATGGALLLCLLAVLLGWVW), 99–119 (VYGNIFSFFIGHRLVVVLSDF), 247–267 (ICLHSQLFLINICPWFYYLPF), and 328–348 (LFYIIGDLFIAGTDTTTNSLL). Heme is bound at residue Cys476. Residues 481-501 (LAKMELFLMFVSLMQTFTFAL) form a helical membrane-spanning segment.

Belongs to the cytochrome P450 family. Heme is required as a cofactor. Widely expressed. Expressed in heart, brain and liver.

It is found in the endoplasmic reticulum membrane. It localises to the microsome membrane. The protein localises to the mitochondrion inner membrane. The catalysed reaction is an omega-methyl-long-chain fatty acid + reduced [NADPH--hemoprotein reductase] + O2 = an omega-hydroxy-long-chain fatty acid + oxidized [NADPH--hemoprotein reductase] + H2O + H(+). The enzyme catalyses (5Z,8Z,11Z,14Z)-eicosatetraenoate + reduced [NADPH--hemoprotein reductase] + O2 = 19-hydroxy-(5Z,8Z,11Z,14Z)-eicosatetraenoate + oxidized [NADPH--hemoprotein reductase] + H2O + H(+). It carries out the reaction (5Z,8Z,11Z,14Z)-eicosatetraenoate + reduced [NADPH--hemoprotein reductase] + O2 = 20-hydroxy-(5Z,8Z,11Z,14Z)-eicosatetraenoate + oxidized [NADPH--hemoprotein reductase] + H2O + H(+). It catalyses the reaction N-[(5Z,8Z,11Z,14Z)-eicosatetraenoyl]-serotonin + reduced [NADPH--hemoprotein reductase] + O2 = 2-oxo-N-[(5Z,8Z,11Z,14Z)-eicosatetraenoyl]-serotonin + oxidized [NADPH--hemoprotein reductase] + H2O + H(+). Its function is as follows. A cytochrome P450 monooxygenase involved in the metabolism of arachidonic acid and its conjugates. Mechanistically, uses molecular oxygen inserting one oxygen atom into a substrate, and reducing the second into a water molecule, with two electrons provided by NADPH via cytochrome P450 reductase (CPR; NADPH-ferrihemoprotein reductase). Acts as an omega and omega-1 hydroxylase for arachidonic acid and possibly for other long chain fatty acids. May modulate the arachidonic acid signaling pathway and play a role in other fatty acid signaling processes. May down-regulate the biological activities of N-arachidonoyl-serotonin, an endocannabinoid that has anti-nociceptive effects through inhibition of fatty acid amide hydrolase FAAH, TRPV1 receptor and T-type calcium channels. Catalyzes C-2 oxidation of the indole ring of N-arachidonoyl-serotonin forming a less active product 2-oxo-N-arachidonoyl-serotonin. The polypeptide is Cytochrome P450 2U1 (Mus musculus (Mouse)).